Consider the following 321-residue polypeptide: Quinol oxidase subunit 2 (321 aa).

The N-terminal stretch at 1–25 (MIFLFRALKPLLVLALLTVVFVLGG) is a signal peptide. Cysteine 26 carries N-palmitoyl cysteine lipidation. Residue cysteine 26 is the site of S-diacylglycerol cysteine attachment. The next 2 helical transmembrane spans lie at 49-69 (SIGF…IILV) and 90-110 (TFLE…LSVP). Residues 294–321 (QAVSPHSKTDPFENVKKNEFKKSDDTEE) are disordered. Basic and acidic residues predominate over residues 300–321 (SKTDPFENVKKNEFKKSDDTEE).

Belongs to the cytochrome c oxidase subunit 2 family. In terms of assembly, interacts with FloT.

It is found in the cell membrane. The protein localises to the membrane raft. The enzyme catalyses 2 a quinol + O2 = 2 a quinone + 2 H2O. In terms of biological role, catalyzes quinol oxidation with the concomitant reduction of oxygen to water. Major component for energy conversion during vegetative growth. Subunit II transfers the electrons from a quinol to the binuclear center of the catalytic subunit I. The chain is Quinol oxidase subunit 2 (qoxA) from Bacillus subtilis (strain 168).